The primary structure comprises 183 residues: Dual-action ribosomal maturation protein DarP (183 aa).

Belongs to the DarP family.

Its subcellular location is the cytoplasm. Its function is as follows. Member of a network of 50S ribosomal subunit biogenesis factors which assembles along the 30S-50S interface, preventing incorrect 23S rRNA structures from forming. Promotes peptidyl transferase center (PTC) maturation. This chain is Dual-action ribosomal maturation protein DarP, found in Shigella boydii serotype 18 (strain CDC 3083-94 / BS512).